The following is a 497-amino-acid chain: Probable malate:quinone oxidoreductase (497 aa).

It belongs to the MQO family. FAD serves as cofactor.

The enzyme catalyses (S)-malate + a quinone = a quinol + oxaloacetate. Its pathway is carbohydrate metabolism; tricarboxylic acid cycle; oxaloacetate from (S)-malate (quinone route): step 1/1. This Exiguobacterium sibiricum (strain DSM 17290 / CCUG 55495 / CIP 109462 / JCM 13490 / 255-15) protein is Probable malate:quinone oxidoreductase.